A 431-amino-acid chain; its full sequence is Enolase (431 aa).

Gln167 serves as a coordination point for (2R)-2-phosphoglycerate. Glu209 serves as the catalytic Proton donor. Mg(2+) contacts are provided by Asp246, Glu287, and Asp314. Residues Lys339, Arg368, Ser369, and Lys390 each coordinate (2R)-2-phosphoglycerate. Residue Lys339 is the Proton acceptor of the active site.

Belongs to the enolase family. Mg(2+) serves as cofactor.

The protein localises to the cytoplasm. It localises to the secreted. The protein resides in the cell surface. The enzyme catalyses (2R)-2-phosphoglycerate = phosphoenolpyruvate + H2O. The protein operates within carbohydrate degradation; glycolysis; pyruvate from D-glyceraldehyde 3-phosphate: step 4/5. Catalyzes the reversible conversion of 2-phosphoglycerate (2-PG) into phosphoenolpyruvate (PEP). It is essential for the degradation of carbohydrates via glycolysis. The sequence is that of Enolase from Prochlorococcus marinus (strain MIT 9303).